The primary structure comprises 298 residues: Lipoyl synthase (298 aa).

7 residues coordinate [4Fe-4S] cluster: C40, C45, C51, C67, C71, C74, and S280. The Radical SAM core domain maps to 53–269 (AVRKTATFMI…KEIALSKGFS (217 aa)).

This sequence belongs to the radical SAM superfamily. Lipoyl synthase family. Requires [4Fe-4S] cluster as cofactor.

Its subcellular location is the cytoplasm. It carries out the reaction [[Fe-S] cluster scaffold protein carrying a second [4Fe-4S](2+) cluster] + N(6)-octanoyl-L-lysyl-[protein] + 2 oxidized [2Fe-2S]-[ferredoxin] + 2 S-adenosyl-L-methionine + 4 H(+) = [[Fe-S] cluster scaffold protein] + N(6)-[(R)-dihydrolipoyl]-L-lysyl-[protein] + 4 Fe(3+) + 2 hydrogen sulfide + 2 5'-deoxyadenosine + 2 L-methionine + 2 reduced [2Fe-2S]-[ferredoxin]. Its pathway is protein modification; protein lipoylation via endogenous pathway; protein N(6)-(lipoyl)lysine from octanoyl-[acyl-carrier-protein]. In terms of biological role, catalyzes the radical-mediated insertion of two sulfur atoms into the C-6 and C-8 positions of the octanoyl moiety bound to the lipoyl domains of lipoate-dependent enzymes, thereby converting the octanoylated domains into lipoylated derivatives. This chain is Lipoyl synthase, found in Bacillus cereus (strain G9842).